Consider the following 284-residue polypeptide: Interferon antagonist OPG039 (284 aa).

ANK repeat units follow at residues 29 to 58, 60 to 89, 93 to 122, 127 to 157, 159 to 188, and 192 to 221; these read NGHS…LKNL, DNEF…DDSQ, KGNT…RLMF, GWKT…PFDL, ILLS…STNT, and LFIP…NIYS.

The protein belongs to the orthopoxvirus OPG039 family.

Its subcellular location is the host cytoplasm. It is found in the host nucleus. Its function is as follows. Inhibits antiviral activity induced by type I interferons. Does not block signal transduction of IFN, but is important to counter the host antiviral state induced by a pre-treatment with IFN. Plays a role in the inhibition of host NF-kappa-B activation by preventing the acetylation of the RELA/p65 subunit of NF-kappaB. The polypeptide is Interferon antagonist OPG039 (OPG039) (Cynomys gunnisoni (Gunnison's prairie dog)).